The chain runs to 1077 residues: Adenylate cyclase type 4 (1077 aa).

The Cytoplasmic segment spans residues 1–28 (MARLFSPRPPPSEDLFYETYYSLSQQYP). Helical transmembrane passes span 29–50 (LLIL…VAWA), 61–80 (FLTT…GLAS), 94–117 (GLIW…VSAW), 120–138 (VSFF…PLGM), 141–162 (AAAA…YLGW), and 170–190 (LLPQ…VGAY). The Cytoplasmic portion of the chain corresponds to 191-582 (HKALMERALR…YRLSALPAFK (392 aa)). Residues Asp278, Ile279, and Asp322 each coordinate Mg(2+). ATP is bound by residues 278–283 (DIVGFT), 320–322 (LGD), and Arg366. The tract at residues 503–524 (TSTPLPEKAFSPQWSLDRSRTP) is disordered. Ser517 carries the post-translational modification Phosphoserine. Thr533 carries the post-translational modification Phosphothreonine. 3 helical membrane passes run 583–604 (YYAA…LVTT), 608–630 (ALII…CFSE), and 661–684 (VALG…FLPV). Residues 685–717 (SSDCLFLASNVSSVTFNASWEMPGSLPLISIPL) are Extracellular-facing. N-linked (GlcNAc...) asparagine glycosylation is found at Asn694 and Asn701. The next 3 membrane-spanning stretches (helical) occupy residues 718–738 (ISIP…SLFL), 746–766 (LLLL…SHAW), and 793–809 (MGAI…LVLA). Residues 810–1077 (RQNEYYCRLD…LTRTGSPSAS (268 aa)) are Cytoplasmic-facing. Residues Lys927, 1007–1009 (DIW), 1014–1018 (NVASR), and Lys1054 each bind ATP.

The protein belongs to the adenylyl cyclase class-4/guanylyl cyclase family. Mg(2+) serves as cofactor. Mn(2+) is required as a cofactor.

It is found in the cell membrane. The protein localises to the cytoplasm. The catalysed reaction is ATP = 3',5'-cyclic AMP + diphosphate. Activated by forskolin. Insensitive to calcium/calmodulin. Stimulated by GNAS and by the G-protein beta and gamma subunit complex. Functionally, catalyzes the formation of the signaling molecule cAMP in response to G-protein signaling. This is Adenylate cyclase type 4 (Adcy4) from Mus musculus (Mouse).